We begin with the raw amino-acid sequence, 312 residues long: Ribosomal protein L11 methyltransferase (312 aa).

Residues T160, G181, D203, and N246 each coordinate S-adenosyl-L-methionine.

This sequence belongs to the methyltransferase superfamily. PrmA family.

The protein localises to the cytoplasm. The catalysed reaction is L-lysyl-[protein] + 3 S-adenosyl-L-methionine = N(6),N(6),N(6)-trimethyl-L-lysyl-[protein] + 3 S-adenosyl-L-homocysteine + 3 H(+). Methylates ribosomal protein L11. This Staphylococcus aureus (strain JH1) protein is Ribosomal protein L11 methyltransferase.